The primary structure comprises 420 residues: MRVWVGIDDTDSSRGMCTTYLAVLAMERVERELGKVIGFPRLIRLNPTIPYKTRGNGAVSFLVEVDDVGELVDVVNEVIIEHAMLDDEKTNPGAVFVDEELAVKLKPFADKAIKDVLQIDEALFVIGKYFIPHLRHKKGRGLIGALAAVGAELEDFTLELIAYRYPERFGTEREYDEESFFDMDYELYPQTFDNVDWCNDVVVCIPNTPCPVLYGIRGESVEALYKAMESVKTEPVDRRMIFVTNHATDMHLIGEEEVHRLENYRSYRLRGRVTLEPYDIEGGHVFFEIDTKFGSVKCAAFEPTKQFRNVIRLLRKGDVVEVYGSMKKDTINLEKIQIVELAEIWVEKNPICPSCGRRMESAGRGQGFRCKKCRTKADEKLREKVERELQPGFYEVPPSARRHLSKPLIRMNVEGRHIFR.

The OB DNA-binding region spans 268–329 (RLRGRVTLEP…VEVYGSMKKD (62 aa)).

Belongs to the TiaS family.

The protein localises to the cytoplasm. It carries out the reaction cytidine(34) in tRNA(Ile2) + agmatine + ATP + H2O = 2-agmatinylcytidine(34) in tRNA(Ile2) + AMP + 2 phosphate + 2 H(+). ATP-dependent agmatine transferase that catalyzes the formation of 2-agmatinylcytidine (agm2C) at the wobble position (C34) of tRNA(Ile2), converting the codon specificity from AUG to AUA. This chain is tRNA(Ile2) 2-agmatinylcytidine synthetase TiaS (tiaS), found in Archaeoglobus fulgidus (strain ATCC 49558 / DSM 4304 / JCM 9628 / NBRC 100126 / VC-16).